Consider the following 396-residue polypeptide: Ribosomal RNA large subunit methyltransferase I (396 aa).

The 80-residue stretch at 2-81 (SVRLVLAKGR…ESIDIAFFSR (80 aa)) folds into the PUA domain.

It belongs to the methyltransferase superfamily. RlmI family.

The protein localises to the cytoplasm. It carries out the reaction cytidine(1962) in 23S rRNA + S-adenosyl-L-methionine = 5-methylcytidine(1962) in 23S rRNA + S-adenosyl-L-homocysteine + H(+). Functionally, specifically methylates the cytosine at position 1962 (m5C1962) of 23S rRNA. This chain is Ribosomal RNA large subunit methyltransferase I, found in Shigella flexneri.